A 130-amino-acid chain; its full sequence is MLESSVVGIGKWVVEDYIFVGLFFVVACFISCVMLALPVFIAPSSHERHKGDSYECGFDKLSSTGERFNVRFYLVGILFIIFDLEIIFLFPWAVSARELGPAAFVSVLIFLIILTVGFVYEFVSGALDWR.

3 helical membrane passes run 17–37 (YIFV…MLAL), 74–94 (LVGI…PWAV), and 99–119 (LGPA…VGFV).

It belongs to the complex I subunit 3 family. NDH-1 is composed of 14 different subunits. Subunits NuoA, H, J, K, L, M, N constitute the membrane sector of the complex.

It localises to the cell inner membrane. The catalysed reaction is a quinone + NADH + 5 H(+)(in) = a quinol + NAD(+) + 4 H(+)(out). NDH-1 shuttles electrons from NADH, via FMN and iron-sulfur (Fe-S) centers, to quinones in the respiratory chain. The immediate electron acceptor for the enzyme in this species is believed to be ubiquinone. Couples the redox reaction to proton translocation (for every two electrons transferred, four hydrogen ions are translocated across the cytoplasmic membrane), and thus conserves the redox energy in a proton gradient. The polypeptide is NADH-quinone oxidoreductase subunit A (Neorickettsia sennetsu (strain ATCC VR-367 / Miyayama) (Ehrlichia sennetsu)).